The chain runs to 213 residues: Uridine kinase (213 aa).

Residue 15 to 22 (GASASGKS) coordinates ATP.

The protein belongs to the uridine kinase family.

It localises to the cytoplasm. It carries out the reaction uridine + ATP = UMP + ADP + H(+). The enzyme catalyses cytidine + ATP = CMP + ADP + H(+). It functions in the pathway pyrimidine metabolism; CTP biosynthesis via salvage pathway; CTP from cytidine: step 1/3. Its pathway is pyrimidine metabolism; UMP biosynthesis via salvage pathway; UMP from uridine: step 1/1. This Cronobacter sakazakii (strain ATCC BAA-894) (Enterobacter sakazakii) protein is Uridine kinase.